The primary structure comprises 160 residues: Putative pre-16S rRNA nuclease (160 aa).

The protein belongs to the YqgF nuclease family.

It localises to the cytoplasm. Could be a nuclease involved in processing of the 5'-end of pre-16S rRNA. The protein is Putative pre-16S rRNA nuclease of Rhodopseudomonas palustris (strain ATCC BAA-98 / CGA009).